We begin with the raw amino-acid sequence, 2439 residues long: Protein roller-3 (2439 aa).

The N-terminal stretch at 1–26 (MLDFPRFSLFLFLLFSSFLFSSFVHA) is a signal peptide. Residues 27 to 1851 (ATVFSSSLKT…EEEKGGILPY (1825 aa)) lie on the Extracellular side of the membrane. Residues Asn-64, Asn-182, Asn-334, Asn-394, Asn-496, Asn-533, Asn-657, Asn-766, Asn-868, Asn-1003, Asn-1036, Asn-1090, and Asn-1261 are each glycosylated (N-linked (GlcNAc...) asparagine). The Fibronectin type-III 1 domain maps to 618–720 (KPRIVAVSSI…STSNTALPDL (103 aa)). Fibronectin type-III domains are found at residues 1403–1503 (SKGI…TGFG), 1507–1628 (APRD…TLDV), 1629–1732 (PGTL…IQQA), and 1738–1843 (VPTA…EKEE). N-linked (GlcNAc...) asparagine glycans are attached at residues Asn-1567, Asn-1636, Asn-1677, and Asn-1779. The helical transmembrane segment at 1852–1872 (FLGISIILLLAAMILVGCFWL) threads the bilayer. Over 1873–2439 (KSRRRQQMKK…GGTCRSVSQV (567 aa)) the chain is Cytoplasmic. Residues 1928 to 2199 (VEIVRHISDC…ATILKIFETC (272 aa)) form the Protein kinase domain. Residues 1934 to 1942 (ISDCSYGSV) and Lys-1963 each bind ATP. Disordered stretches follow at residues 2214–2277 (NEGS…RPAT), 2315–2348 (SQRP…NRTN), and 2412–2439 (HLRA…VSQV). Polar residues-rich tracts occupy residues 2216-2233 (GSDN…SSRE), 2334-2347 (ATSS…SNRT), and 2420-2439 (PPTR…VSQV).

It localises to the membrane. In terms of biological role, involved in larval development and locomotion. The sequence is that of Protein roller-3 from Caenorhabditis briggsae.